Here is a 459-residue protein sequence, read N- to C-terminus: F-box protein At1g47340 (459 aa).

The F-box domain maps to Phe31–Leu76. Positions Ala434–Ser459 are disordered. Residues Trp438–Ser459 show a composition bias toward acidic residues.

The polypeptide is F-box protein At1g47340 (Arabidopsis thaliana (Mouse-ear cress)).